A 142-amino-acid chain; its full sequence is Large ribosomal subunit protein uL13 (142 aa).

Belongs to the universal ribosomal protein uL13 family. As to quaternary structure, part of the 50S ribosomal subunit.

Its function is as follows. This protein is one of the early assembly proteins of the 50S ribosomal subunit, although it is not seen to bind rRNA by itself. It is important during the early stages of 50S assembly. In Aliivibrio fischeri (strain ATCC 700601 / ES114) (Vibrio fischeri), this protein is Large ribosomal subunit protein uL13.